The following is a 354-amino-acid chain: Methylthioribose-1-phosphate isomerase (354 aa).

Residues Arg58–Ala60, Arg101, and Gln204 each bind substrate. Residue Asp245 is the Proton donor of the active site. Residue Asn255–Lys256 coordinates substrate.

The protein belongs to the eIF-2B alpha/beta/delta subunits family. MtnA subfamily.

It catalyses the reaction 5-(methylsulfanyl)-alpha-D-ribose 1-phosphate = 5-(methylsulfanyl)-D-ribulose 1-phosphate. It participates in amino-acid biosynthesis; L-methionine biosynthesis via salvage pathway; L-methionine from S-methyl-5-thio-alpha-D-ribose 1-phosphate: step 1/6. In terms of biological role, catalyzes the interconversion of methylthioribose-1-phosphate (MTR-1-P) into methylthioribulose-1-phosphate (MTRu-1-P). This Xanthomonas axonopodis pv. citri (strain 306) protein is Methylthioribose-1-phosphate isomerase.